Consider the following 327-residue polypeptide: Geranylgeranyl transferase type-2 subunit alpha (327 aa).

5 PFTA repeats span residues Tyr44–Ser78, Phe84–Thr118, Val123–Ser157, Leu163–Gln197, and Tyr207–Val241.

The protein belongs to the protein prenyltransferase subunit alpha family. As to quaternary structure, heterodimer of an alpha and a beta subunit.

It carries out the reaction geranylgeranyl diphosphate + L-cysteinyl-[protein] = S-geranylgeranyl-L-cysteinyl-[protein] + diphosphate. Functionally, catalyzes the transfer of a geranyl-geranyl moiety from geranyl-geranyl pyrophosphate to proteins having the C-terminal -XCC or -XCXC, where both cysteines may become modified. Acts on YPT1 and SEC4. This Saccharomyces cerevisiae (strain ATCC 204508 / S288c) (Baker's yeast) protein is Geranylgeranyl transferase type-2 subunit alpha (BET4).